The primary structure comprises 361 residues: Ataxin-3 (361 aa).

Residue M1 forms a Peptide (Met-Gly) (interchain with G-Cter in ubiquitin) linkage. One can recognise a Josephin domain in the interval 1-180 (MESIFHEKQE…DCEADQLLQM (180 aa)). Catalysis depends on C14, which acts as the Nucleophile. Catalysis depends on H119, which acts as the Proton acceptor. N134 is an active-site residue. K200 participates in a covalent cross-link: Glycyl lysine isopeptide (Lys-Gly) (interchain with G-Cter in ubiquitin). Residue S219 is modified to Phosphoserine. 2 UIM domains span residues 224 to 243 (EDEE…IDME) and 244 to 263 (DEEA…SSRN). Residues 258–278 (QGSSRNISQDMTQTSGTNLTS) are compositionally biased toward polar residues. A disordered region spans residues 258–338 (QGSSRNISQD…DLGDAMSEED (81 aa)). 2 positions are modified to phosphoserine: S265 and S272. Positions 279 to 293 (EELRKRREAYFEKQQ) are enriched in basic and acidic residues. Residues 294-305 (QKQQQQQQQQQQ) are compositionally biased toward low complexity. Polar residues predominate over residues 306–325 (GDLSGQSSHPCERPATSSGA). Phosphoserine is present on S328. The UIM 3 domain maps to 331-349 (GDAMSEEDMLQAAVTMSLE).

As to quaternary structure, interacts with STUB1/CHIP (when monoubiquitinated). Interacts with DNA repair proteins RAD23A and RAD23B. Interacts with BECN1 (via its poly-Gln domain). Interacts with PRKN, UBR2, VCP and tubulin. Short isoform 1 interacts with CASP7. In terms of processing, monoubiquitinated N-terminally by UBE2W, possibly leading to activate the deubiquitinating enzyme activity. Ubiquitous.

It is found in the nucleus matrix. The protein resides in the nucleus. It localises to the lysosome membrane. It carries out the reaction Thiol-dependent hydrolysis of ester, thioester, amide, peptide and isopeptide bonds formed by the C-terminal Gly of ubiquitin (a 76-residue protein attached to proteins as an intracellular targeting signal).. In terms of biological role, deubiquitinating enzyme involved in protein homeostasis maintenance, transcription, cytoskeleton regulation, myogenesis and degradation of misfolded chaperone substrates. Binds long polyubiquitin chains and trims them, while it has weak or no activity against chains of 4 or less ubiquitins. Involved in degradation of misfolded chaperone substrates via its interaction with STUB1/CHIP: recruited to monoubiquitinated STUB1/CHIP, and restricts the length of ubiquitin chain attached to STUB1/CHIP substrates and preventing further chain extension. Interacts with key regulators of transcription and represses transcription: acts as a histone-binding protein that regulates transcription. Acts as a negative regulator of mTORC1 signaling in response to amino acid deprivation by mediating deubiquitination of RHEB, thereby promoting RHEB inactivation by the TSC-TBC complex. Regulates autophagy via the deubiquitination of 'Lys-402' of BECN1 leading to the stabilization of BECN1. This Homo sapiens (Human) protein is Ataxin-3.